An 89-amino-acid chain; its full sequence is MNIKTGDKVRVIAGKDKGKEGSVTKVFLKTDRVIVEGVNKVKKHQKPTQAEPKGGIIEKEAAIHVSNVMLLDASKKKTIRASKRESNKK.

This sequence belongs to the universal ribosomal protein uL24 family. As to quaternary structure, part of the 50S ribosomal subunit.

Its function is as follows. One of two assembly initiator proteins, it binds directly to the 5'-end of the 23S rRNA, where it nucleates assembly of the 50S subunit. Functionally, one of the proteins that surrounds the polypeptide exit tunnel on the outside of the subunit. This is Large ribosomal subunit protein uL24 from Oenococcus oeni (strain ATCC BAA-331 / PSU-1).